Reading from the N-terminus, the 489-residue chain is Ribulose-1,5 bisphosphate carboxylase/oxygenase large subunit N-methyltransferase, chloroplastic (489 aa).

The N-terminal 37 residues, methionine 1–serine 37, are a transit peptide targeting the chloroplast. Residues glutamate 64–aspartate 288 form the SET domain. Residues glutamate 80–leucine 82 and arginine 222 each bind S-adenosyl-L-methionine. Substrate is bound by residues arginine 222, arginine 226, and aspartate 239. Position 242 to 243 (asparagine 242 to histidine 243) interacts with S-adenosyl-L-methionine. Residues tyrosine 254, tyrosine 287, and tyrosine 300 each coordinate substrate.

Belongs to the class V-like SAM-binding methyltransferase superfamily. Plant protein-lysine LSMT methyltransferase family. As to quaternary structure, homotrimer. In terms of tissue distribution, highly expressed in leaf.

The protein localises to the plastid. It is found in the chloroplast. The catalysed reaction is L-lysyl-[ribulose-1,5-bisphosphate carboxylase] + 3 S-adenosyl-L-methionine = N(6),N(6),N(6)-trimethyl-L-lysyl-[ribulose-1,5-bisphosphate carboxylase] + 3 S-adenosyl-L-homocysteine + 3 H(+). It carries out the reaction [fructose-bisphosphate aldolase]-L-lysine + 3 S-adenosyl-L-methionine = [fructose-bisphosphate aldolase]-N(6),N(6),N(6)-trimethyl-L-lysine + 3 S-adenosyl-L-homocysteine + 3 H(+). Its function is as follows. Methylates 'Lys-14' of the large subunit of RuBisCO. Can also use with lower efficiency chloroplastic fructose-bisphosphate aldolases and gamma-tocopherol methyltransferase as substrates, but not a cytosolic aldolase. In Pisum sativum (Garden pea), this protein is Ribulose-1,5 bisphosphate carboxylase/oxygenase large subunit N-methyltransferase, chloroplastic (RBCMT).